The primary structure comprises 153 residues: MNVGVAHSEVNPNTRVMNSRGIWLAYIILVGLLHVVLLSIPFFSIPVVWTLTNVIHNLAMYIFLHTVKGTPFETPDQGKARLLTHWEQMDYGLQFTSSRKFLSISPIVLYLLASFYTKYDAAHFLINTASLLSVLLPKLPQFHGVRLFGINKY.

Over 1 to 21 the chain is Cytoplasmic; the sequence is MNVGVAHSEVNPNTRVMNSRG. Helical transmembrane passes span 22–42 and 43–63; these read IWLAYIILVGLLHVVLLSIPF and FSIPVVWTLTNVIHNLAMYIF. The Cytoplasmic segment spans residues 64–105; it reads LHTVKGTPFETPDQGKARLLTHWEQMDYGLQFTSSRKFLSIS. The chain crosses the membrane as a helical span at residues 106–126; that stretch reads PIVLYLLASFYTKYDAAHFLI. The Extracellular portion of the chain corresponds to 127–153; it reads NTASLLSVLLPKLPQFHGVRLFGINKY.

It belongs to the ORM family. In terms of assembly, ceramide-sensitive subunit of the serine palmitoyltransferase (SPT) complex, which is also composed of SPTLC1, SPTLC2/3 and SPTSSA/B.

The protein localises to the endoplasmic reticulum membrane. Functionally, plays an essential role in the homeostatic regulation of sphingolipid de novo biosynthesis by modulating the activity of the serine palmitoyltransferase (SPT) in response to ceramide levels. When complexed to SPT, the binding of ceramides to its N-terminus stabilizes a conformation that block SPT substrate entry, hence preventing SPT catalytic activity. Through this mechanism, maintains ceramide levels at sufficient concentrations for the production of complex sphingolipids, but which prevents the accumulation of ceramides to levels that trigger apoptosis. The sequence is that of ORM1-like protein 2 (Ormdl2) from Mus musculus (Mouse).